A 142-amino-acid polypeptide reads, in one-letter code: Transcriptional regulator MraZ (142 aa).

2 consecutive SpoVT-AbrB domains span residues arginine 5 to serine 47 and alanine 76 to asparagine 119.

It belongs to the MraZ family. Forms oligomers.

The protein resides in the cytoplasm. It is found in the nucleoid. The polypeptide is Transcriptional regulator MraZ (Thermomicrobium roseum (strain ATCC 27502 / DSM 5159 / P-2)).